We begin with the raw amino-acid sequence, 419 residues long: Ubiquitin-like modifier-activating enzyme 5 (419 aa).

The disordered stretch occupies residues 18–47; it reads NRLGNVKKDHPLESSSNSKPTHQPKSPAPY. Over residues 30-41 the composition is skewed to polar residues; it reads ESSSNSKPTHQP. The ATP site is built by glycine 94, aspartate 115, lysine 138, asparagine 161, and asparagine 194. Zn(2+) is bound by residues cysteine 236 and cysteine 239. Cysteine 260 serves as the catalytic Glycyl thioester intermediate. 2 residues coordinate Zn(2+): cysteine 313 and cysteine 318.

The protein belongs to the ubiquitin-activating E1 family. UBA5 subfamily. As to quaternary structure, interacts with ufc-1. As to expression, expressed in the intestine.

In terms of biological role, E1-like enzyme which activates ufm-1. Required for interaction between ufm-1 and ufc-1. The chain is Ubiquitin-like modifier-activating enzyme 5 from Caenorhabditis elegans.